We begin with the raw amino-acid sequence, 233 residues long: uncharacterized protein (233 aa).

A signal peptide spans 1 to 23 (MEIKYFLVLLVGFLLVLPSIVNP). The disordered stretch occupies residues 42–217 (LDVNNPHNPN…HHHHQEASEC (176 aa)). Over residues 45–64 (NNPHNPNNNPHNPHNPNNNP) the composition is skewed to low complexity. Over residues 65-211 (HHPHHLHHHH…HPHPHHHHHH (147 aa)) the composition is skewed to basic residues.

The protein localises to the secreted. This is an uncharacterized protein from Dictyostelium discoideum (Social amoeba).